The chain runs to 194 residues: MAIIIGIDPGSRMTGYGILQQTGDKLTYIDSGTIRTDTKEMPERLKRIFNGLTRITQHHLKYADEPIYTAIEQVFMAENPDSALKLGQARGAAIAAMVALDLEVSEYTARQIKQAVCGYGAAAKEQVQDMVCRILTLDFVPQQDAADGLACAICHAHSSHSMNKLILNSAMRGRGASKKKGRWRLTEEDLGNLR.

Residues Asp8, Glu72, and Asp144 contribute to the active site. 3 residues coordinate Mg(2+): Asp8, Glu72, and Asp144.

The protein belongs to the RuvC family. As to quaternary structure, homodimer which binds Holliday junction (HJ) DNA. The HJ becomes 2-fold symmetrical on binding to RuvC with unstacked arms; it has a different conformation from HJ DNA in complex with RuvA. In the full resolvosome a probable DNA-RuvA(4)-RuvB(12)-RuvC(2) complex forms which resolves the HJ. The cofactor is Mg(2+).

It localises to the cytoplasm. It carries out the reaction Endonucleolytic cleavage at a junction such as a reciprocal single-stranded crossover between two homologous DNA duplexes (Holliday junction).. The RuvA-RuvB-RuvC complex processes Holliday junction (HJ) DNA during genetic recombination and DNA repair. Endonuclease that resolves HJ intermediates. Cleaves cruciform DNA by making single-stranded nicks across the HJ at symmetrical positions within the homologous arms, yielding a 5'-phosphate and a 3'-hydroxyl group; requires a central core of homology in the junction. The consensus cleavage sequence is 5'-(A/T)TT(C/G)-3'. Cleavage occurs on the 3'-side of the TT dinucleotide at the point of strand exchange. HJ branch migration catalyzed by RuvA-RuvB allows RuvC to scan DNA until it finds its consensus sequence, where it cleaves and resolves the cruciform DNA. In Psychrobacter arcticus (strain DSM 17307 / VKM B-2377 / 273-4), this protein is Crossover junction endodeoxyribonuclease RuvC.